A 418-amino-acid chain; its full sequence is Homocitrate synthase, mitochondrial (418 aa).

Positions 1 to 10 (MSVSEANGTE) are enriched in polar residues. A disordered region spans residues 1–25 (MSVSEANGTETIKPPMNGNPYGPNP). Low complexity predominate over residues 14-25 (PPMNGNPYGPNP). The region spanning 35–288 (FSIIESTLRE…THKYKLNQLR (254 aa)) is the Pyruvate carboxyltransferase domain. The 2-oxoglutarate site is built by Arg-43, Glu-44, and His-103. Glu-44 serves as a coordination point for L-lysine. Residue Glu-44 participates in Zn(2+) binding. Position 123 (Asp-123) interacts with L-lysine. 2-oxoglutarate-binding residues include Arg-163, Ser-165, Thr-197, His-224, and His-226. Thr-197 lines the L-lysine pocket. Zn(2+)-binding residues include His-224 and His-226. His-321 functions as the Proton acceptor in the catalytic mechanism.

Belongs to the alpha-IPM synthase/homocitrate synthase family. Homocitrate synthase LYS20/LYS21 subfamily. Mg(2+) is required as a cofactor. Mn(2+) serves as cofactor. The cofactor is Zn(2+). Requires Co(2+) as cofactor.

It is found in the mitochondrion. The enzyme catalyses acetyl-CoA + 2-oxoglutarate + H2O = (2R)-homocitrate + CoA + H(+). It functions in the pathway amino-acid biosynthesis; L-lysine biosynthesis via AAA pathway; L-alpha-aminoadipate from 2-oxoglutarate: step 1/5. With respect to regulation, the activity is controled by feedback inhibition by L-lysine, the final product of the pathway that acts as a competitive inhibitor of 2-oxoglutarate. Its function is as follows. Catalyzes the aldol-type condensation of 2-oxoglutarate with acetyl-CoA to yield homocitrate, the first step of the alpha-aminoadipate (AAA) lysine biosynthesis pathway. In Schizosaccharomyces pombe (strain 972 / ATCC 24843) (Fission yeast), this protein is Homocitrate synthase, mitochondrial.